The sequence spans 361 residues: uncharacterized protein (361 aa).

Thr12 bears the Phosphothreonine mark.

The protein resides in the cytoplasm. The protein localises to the nucleus. This is an uncharacterized protein from Schizosaccharomyces pombe (strain 972 / ATCC 24843) (Fission yeast).